The chain runs to 672 residues: Transcriptional regulator Kaiso (672 aa).

Positions 1-103 are interaction with NCOR1; it reads MESRKLISAT…RSDLLDELIK (103 aa). The self-association stretch occupies residues 1–136; that stretch reads MESRKLISAT…SGTAQDGNTE (136 aa). The BTB domain maps to 32-94; that stretch reads CDVTVIVEDR…IYSSKIVRVR (63 aa). Residues Lys151 and Lys153 each participate in a glycyl lysine isopeptide (Lys-Gly) (interchain with G-Cter in SUMO2) cross-link. The residue at position 251 (Thr251) is a Phosphothreonine. The interaction with CBFA2T3 stretch occupies residues 298–573; sequence LPNHMPSSIN…FMSSHIKSVH (276 aa). Residues 325–354 are disordered; sequence KANEEEEEEIIDDDDDTISSSPDSAVSNTS. Positions 328 to 341 are enriched in acidic residues; it reads EEEEEEIIDDDDDT. Glycyl lysine isopeptide (Lys-Gly) (interchain with G-Cter in SUMO2) cross-links involve residues Lys390, Lys407, Lys414, Lys449, Lys465, Lys474, and Lys479. Residues 454-672 are interaction with CTNND1; sequence EGEARLENEI…EFEFIIPESY (219 aa). The Nuclear localization signal motif lies at 471–480; sequence MANKRMKVKH. C2H2-type zinc fingers lie at residues 494–516, 522–544, and 550–573; these read YICIVCKRSYVCLTSLRRHFNIH, YPCRYCEKVFPLAEYRTKHEIHH, and YQCLACGKSFINYQFMSSHIKSVH. The required for DNA-binding stretch occupies residues 514–638; the sequence is NIHSWEKKYP…TTTSTQNKPM (125 aa). Glycyl lysine isopeptide (Lys-Gly) (interchain with G-Cter in SUMO2) cross-links involve residues Lys539, Lys570, Lys582, Lys611, and Lys618. The segment at 616-635 is disordered; the sequence is GYKVDTGKEPPVGTTTSTQN.

As to quaternary structure, self-associates. Interacts with CTNND2. Interacts with CTNND1, and this interaction inhibits binding to both methylated and non-methylated DNA. Interacts with NCOR1. Interacts with KPNA2/RCH1, which may mediate nuclear import of this protein. Interacts with CBFA2T3. Expressed in vascular endothelium.

It is found in the nucleus. The protein resides in the cytoplasm. Functionally, transcriptional regulator with bimodal DNA-binding specificity. Binds to methylated CpG dinucleotides in the consensus sequence 5'-CGCG-3' and also binds to the non-methylated consensus sequence 5'-CTGCNA-3' also known as the consensus kaiso binding site (KBS). Recruits the N-CoR repressor complex to promote histone deacetylation and the formation of repressive chromatin structures in target gene promoters. May contribute to the repression of target genes of the Wnt signaling pathway. May also activate transcription of a subset of target genes by the recruitment of CTNND2. Represses expression of MMP7 in conjunction with transcriptional corepressors CBFA2T3, CBFA2T2 and RUNX1T1. The polypeptide is Transcriptional regulator Kaiso (ZBTB33) (Homo sapiens (Human)).